A 152-amino-acid polypeptide reads, in one-letter code: Deoxyuridine 5'-triphosphate nucleotidohydrolase (152 aa).

Substrate contacts are provided by residues 71–73, Asn84, 88–90, and Lys98; these read RSG and LID.

It belongs to the dUTPase family. Mg(2+) serves as cofactor.

The enzyme catalyses dUTP + H2O = dUMP + diphosphate + H(+). Its pathway is pyrimidine metabolism; dUMP biosynthesis; dUMP from dCTP (dUTP route): step 2/2. Functionally, this enzyme is involved in nucleotide metabolism: it produces dUMP, the immediate precursor of thymidine nucleotides and it decreases the intracellular concentration of dUTP so that uracil cannot be incorporated into DNA. In Legionella pneumophila subsp. pneumophila (strain Philadelphia 1 / ATCC 33152 / DSM 7513), this protein is Deoxyuridine 5'-triphosphate nucleotidohydrolase.